We begin with the raw amino-acid sequence, 492 residues long: GTPase Der (492 aa).

2 consecutive EngA-type G domains span residues 3 to 166 (PVVA…MDDV) and 205 to 378 (IKLA…DSST). GTP is bound by residues 9–16 (GRPNVGKS), 56–60 (DTGGI), 118–121 (NKTD), 211–218 (GRPNVGKS), 258–262 (DTAGV), and 323–326 (NKWD). Residues 379-463 (RRVSTALLTR…PIRIQFKEGA (85 aa)) form the KH-like domain.

Belongs to the TRAFAC class TrmE-Era-EngA-EngB-Septin-like GTPase superfamily. EngA (Der) GTPase family. In terms of assembly, associates with the 50S ribosomal subunit.

GTPase that plays an essential role in the late steps of ribosome biogenesis. The sequence is that of GTPase Der from Cronobacter sakazakii (strain ATCC BAA-894) (Enterobacter sakazakii).